A 231-amino-acid polypeptide reads, in one-letter code: Urease accessory protein UreE (231 aa).

The disordered stretch occupies residues 185-231 (VASPLDEPHGSGLHIHGIHSHEEGHSHGDHDHDHSHSHGDHDHDHKH). The segment covering 203–231 (HSHEEGHSHGDHDHDHSHSHGDHDHDHKH) has biased composition (basic and acidic residues).

This sequence belongs to the UreE family.

It is found in the cytoplasm. Its function is as follows. Involved in urease metallocenter assembly. Binds nickel. Probably functions as a nickel donor during metallocenter assembly. The chain is Urease accessory protein UreE from Yersinia pestis bv. Antiqua (strain Antiqua).